We begin with the raw amino-acid sequence, 350 residues long: DNA polymerase IV (350 aa).

The 177-residue stretch at 5–181 (IMHYDMDAFY…KKIKIIPGVG (177 aa)) folds into the UmuC domain. Mg(2+)-binding residues include Asp9 and Asp99. Glu100 is an active-site residue.

The protein belongs to the DNA polymerase type-Y family. As to quaternary structure, monomer. Requires Mg(2+) as cofactor.

The protein resides in the cytoplasm. It catalyses the reaction DNA(n) + a 2'-deoxyribonucleoside 5'-triphosphate = DNA(n+1) + diphosphate. Functionally, poorly processive, error-prone DNA polymerase involved in untargeted mutagenesis. Copies undamaged DNA at stalled replication forks, which arise in vivo from mismatched or misaligned primer ends. These misaligned primers can be extended by PolIV. Exhibits no 3'-5' exonuclease (proofreading) activity. May be involved in translesional synthesis, in conjunction with the beta clamp from PolIII. This chain is DNA polymerase IV, found in Fusobacterium nucleatum subsp. nucleatum (strain ATCC 25586 / DSM 15643 / BCRC 10681 / CIP 101130 / JCM 8532 / KCTC 2640 / LMG 13131 / VPI 4355).